Reading from the N-terminus, the 377-residue chain is Fructose-bisphosphate aldolase 1, chloroplastic (377 aa).

R74 and K164 together coordinate substrate. The active-site Proton acceptor is E204. K246 acts as the Schiff-base intermediate with dihydroxyacetone-P in catalysis.

The protein belongs to the class I fructose-bisphosphate aldolase family.

The protein resides in the plastid. It localises to the chloroplast. It catalyses the reaction beta-D-fructose 1,6-bisphosphate = D-glyceraldehyde 3-phosphate + dihydroxyacetone phosphate. It functions in the pathway carbohydrate degradation; glycolysis; D-glyceraldehyde 3-phosphate and glycerone phosphate from D-glucose: step 4/4. The protein is Fructose-bisphosphate aldolase 1, chloroplastic (ALDCHL) of Chlamydomonas reinhardtii (Chlamydomonas smithii).